An 83-amino-acid polypeptide reads, in one-letter code: Small ribosomal subunit protein bS16 (83 aa).

Belongs to the bacterial ribosomal protein bS16 family.

This chain is Small ribosomal subunit protein bS16, found in Syntrophus aciditrophicus (strain SB).